The sequence spans 420 residues: tRNA(Ile)-lysidine synthase (420 aa).

ATP is bound at residue 28–33 (SGGLDS).

It belongs to the tRNA(Ile)-lysidine synthase family.

The protein resides in the cytoplasm. The enzyme catalyses cytidine(34) in tRNA(Ile2) + L-lysine + ATP = lysidine(34) in tRNA(Ile2) + AMP + diphosphate + H(+). Its function is as follows. Ligates lysine onto the cytidine present at position 34 of the AUA codon-specific tRNA(Ile) that contains the anticodon CAU, in an ATP-dependent manner. Cytidine is converted to lysidine, thus changing the amino acid specificity of the tRNA from methionine to isoleucine. This Hydrogenovibrio crunogenus (strain DSM 25203 / XCL-2) (Thiomicrospira crunogena) protein is tRNA(Ile)-lysidine synthase.